The sequence spans 331 residues: uncharacterized protein (331 aa).

This sequence to bacterial alkanal monooxygenase alpha and beta chains.

This is an uncharacterized protein from Bacillus subtilis (strain 168).